The following is a 431-amino-acid chain: Pyroglutamylated RF-amide peptide receptor (431 aa).

Topologically, residues 1 to 46 (MQALNITPEQFSRLLRDHNLTREQFIALYRLRPLVYTPELPGRAKL) are extracellular. N-linked (GlcNAc...) asparagine glycosylation occurs at asparagine 19. A helical transmembrane segment spans residues 47–67 (ALVLTGVLIFALALFGNALVF). At 68–81 (YVVTRSKAMRTVTN) the chain is on the cytoplasmic side. A helical transmembrane segment spans residues 82–102 (IFICSLALSDLLITFFCIPVT). The Extracellular portion of the chain corresponds to 103-120 (MLQNISDNWLGGAFICKM). Residues 121-141 (VPFVQSTAVVTEILTMTCIAV) traverse the membrane as a helical segment. The Cytoplasmic portion of the chain corresponds to 142 to 162 (ERHQGLVHPFKMKWQYTNRRA). Residues 163–183 (FTMLGVVWLVAVIVGSPMWHV) traverse the membrane as a helical segment. Over 184 to 212 (QQLEIKYDFLYEKEHICCLEEWTSPVHQK) the chain is Extracellular. A helical membrane pass occupies residues 213 to 233 (IYTTFILVILFLLPLMVMLIL). Residues 234–271 (YSKIGYELWIKKRVGDGSVLRTIHGKEMSKIARKKKRA) are Cytoplasmic-facing. A helical transmembrane segment spans residues 272 to 292 (VIMMVTVVALFAVCWAPFHVV). Residues 293–311 (HMMIEYSNFEKEYDDVTIK) are Extracellular-facing. The chain crosses the membrane as a helical span at residues 312-332 (MIFAIVQIIGFSNSICNPIVY). Residues 333 to 431 (AFMNENFKKN…AENSPLDSGH (99 aa)) lie on the Cytoplasmic side of the membrane.

This sequence belongs to the G-protein coupled receptor 1 family. As to expression, expressed widely in the brain with high levels in the hypothalamus, trigeminal ganglia and vestibular neurons, and moderate levels in the amygdala, cortex, pituitary, hippocampus, thalamus, caudate nucleus and medulla oblongata. In peripheral tissues, expressed at high levels in the retina and at moderate levels in the heart, kidney, testis and thyroid.

The protein resides in the cell membrane. In terms of biological role, receptor for the orexigenic neuropeptide QRFP. The activity of this receptor is mediated by G proteins that modulate adenylate cyclase activity and intracellular calcium levels. This Homo sapiens (Human) protein is Pyroglutamylated RF-amide peptide receptor (QRFPR).